The sequence spans 197 residues: RILP-like protein 2 (197 aa).

A disordered region spans residues 1–24 (MEDHPVREEEDGEEDEGALAKSPL). A compositionally biased stretch (acidic residues) spans 8-17 (EEEDGEEDEG). Residues 14-96 (EDEGALAKSP…KQEVEGLRKA (83 aa)) form the RH1 domain. Positions 69–153 (VNEGSLAVEE…VQEELQCYRS (85 aa)) form a coiled coil. In terms of domain architecture, RH2 spans 119 to 184 (RPRFTLQELR…GNGEKEERTI (66 aa)).

Belongs to the RILPL family. In terms of assembly, homodimer. Interacts with RAC1. Interacts (via N-terminus) with MYO5A, the interaction is required for its role in dendrite formation. Interacts with RAB8A; interaction is dependent on the phosphorylation of RAB8A on 'Thr-72'. Interacts with RAB10 and RAB12; interaction is dependent on the phosphorylation of 'Thr-73' on RAB10 and 'Ser-105' on RAB12.

Its subcellular location is the cytoplasm. It is found in the cytosol. It localises to the cytoskeleton. The protein localises to the microtubule organizing center. The protein resides in the centrosome. Its subcellular location is the cell projection. It is found in the cilium. Involved in cell shape and neuronal morphogenesis, positively regulating the establishment and maintenance of dendritic spines. Plays a role in cellular protein transport, including protein transport away from primary cilia. May function via activation of RAC1 and PAK1. The sequence is that of RILP-like protein 2 (Rilpl2) from Mus musculus (Mouse).